The primary structure comprises 437 residues: Trigger factor (437 aa).

Residues 163 to 248 (GHMVTIDYAF…LNEIKRKELP (86 aa)) enclose the PPIase FKBP-type domain.

The protein belongs to the FKBP-type PPIase family. Tig subfamily.

The protein resides in the cytoplasm. It catalyses the reaction [protein]-peptidylproline (omega=180) = [protein]-peptidylproline (omega=0). Its function is as follows. Involved in protein export. Acts as a chaperone by maintaining the newly synthesized protein in an open conformation. Functions as a peptidyl-prolyl cis-trans isomerase. The chain is Trigger factor from Pelobacter propionicus (strain DSM 2379 / NBRC 103807 / OttBd1).